The primary structure comprises 716 residues: 1,4-alpha-glucan branching enzyme GlgB (716 aa).

Aspartate 398 acts as the Nucleophile in catalysis. Glutamate 451 functions as the Proton donor in the catalytic mechanism.

The protein belongs to the glycosyl hydrolase 13 family. GlgB subfamily. In terms of assembly, monomer.

It catalyses the reaction Transfers a segment of a (1-&gt;4)-alpha-D-glucan chain to a primary hydroxy group in a similar glucan chain.. It participates in glycan biosynthesis; glycogen biosynthesis. Its function is as follows. Catalyzes the formation of the alpha-1,6-glucosidic linkages in glycogen by scission of a 1,4-alpha-linked oligosaccharide from growing alpha-1,4-glucan chains and the subsequent attachment of the oligosaccharide to the alpha-1,6 position. The protein is 1,4-alpha-glucan branching enzyme GlgB of Nitrobacter winogradskyi (strain ATCC 25391 / DSM 10237 / CIP 104748 / NCIMB 11846 / Nb-255).